A 419-amino-acid polypeptide reads, in one-letter code: Dual specificity mitogen-activated protein kinase kinase 7 (419 aa).

Ala2 bears the N-acetylalanine mark. The stretch at 2 to 30 forms a coiled coil; the sequence is AASSLEQKLSRLEAKLKQENREARRRIDL. The segment covering 18 to 30 has biased composition (basic and acidic residues); the sequence is KQENREARRRIDL. The segment at 18–77 is disordered; the sequence is KQENREARRRIDLNLDISPQRPRPTLQLPLANDGGSRSPSSESSPQHPTPPSRPRHMLGL. Over residues 36–63 the composition is skewed to low complexity; that stretch reads PQRPRPTLQLPLANDGGSRSPSSESSPQ. Positions 37-57 are d Domain; it reads QRPRPTLQLPLANDGGSRSPS. In terms of domain architecture, Protein kinase spans 120–380; that stretch reads LENLGEMGSG…YNKLLEHSFI (261 aa). ATP-binding positions include 126–134 and Lys149; that span reads MGSGTCGQV. The active-site Proton acceptor is the Asp243. Ser271 is modified (phosphoserine; by MAP3K). Position 275 is a phosphothreonine; by MAP3K (Thr275). Residues 377 to 400 are DVD domain; sequence HSFIKHYETLEVDVASWFKDVMAK. Ser411 is subject to Phosphoserine.

It belongs to the protein kinase superfamily. STE Ser/Thr protein kinase family. MAP kinase kinase subfamily. In terms of assembly, interacts with VRK2. Interacts (via its D domain) with its substrates MAPK8/JNK1, MAPK9/JNK2 and MAPK10/JNK3. Interacts (via its DVD domain) with MAP3Ks activators like MAP3K5/ASK1 and MAP3K1/MEKK1. Interacts with MAPK8IP1/JIP1, MAPK8IP2/JIP2 and MAPK8IP3/JIP3 scaffold proteins. Interacts with RASSF7, the interaction promotes phosphorylation. Found in a complex with SH3RF1, RAC1, MAP3K11/MLK3, MAPK8IP1/JIP1 and MAPK8/JNK1. Found in a complex with SH3RF1, RAC2, MAP3K7/TAK1, MAPK8IP1/JIP1, MAPK8/JNK1 and MAPK9/JNK2. Mg(2+) serves as cofactor. Activated by phosphorylation on Ser-271 and Thr-275 by MAP kinase kinase kinases (MAP3Ks).

The protein localises to the nucleus. Its subcellular location is the cytoplasm. The enzyme catalyses L-seryl-[protein] + ATP = O-phospho-L-seryl-[protein] + ADP + H(+). It carries out the reaction L-threonyl-[protein] + ATP = O-phospho-L-threonyl-[protein] + ADP + H(+). The catalysed reaction is L-tyrosyl-[protein] + ATP = O-phospho-L-tyrosyl-[protein] + ADP + H(+). Activated by phosphorylation by specific MAP kinase kinase kinases such as MAP3K1/MEKK1, MAP3K3/MEKK3, MAP3K11/MLK3 and MAP3K12/DLK. In terms of biological role, dual specificity protein kinase which acts as an essential component of the MAP kinase signal transduction pathway. Essential component of the stress-activated protein kinase/c-Jun N-terminal kinase (SAP/JNK) signaling pathway. With MAP2K4/MKK4, is the one of the only known kinase to directly activate the stress-activated protein kinase/c-Jun N-terminal kinases MAPK8/JNK1, MAPK9/JNK2 and MAPK10/JNK3. MAP2K4/MKK4 and MAP2K7/MKK7 both activate the JNKs by phosphorylation, but they differ in their preference for the phosphorylation site in the Thr-Pro-Tyr motif. MAP2K4/MKK4 shows preference for phosphorylation of the Tyr residue and MAP2K7/MKK7 for the Thr residue. The monophosphorylation of JNKs on the Thr residue is sufficient to increase JNK activity indicating that MAP2K7/MKK7 is important to trigger JNK activity, while the additional phosphorylation of the Tyr residue by MAP2K4/MKK4 ensures optimal JNK activation. Has a specific role in JNK signal transduction pathway activated by pro-inflammatory cytokines. The MKK/JNK signaling pathway is also involved in mitochondrial death signaling pathway, including the release cytochrome c, leading to apoptosis. Part of a non-canonical MAPK signaling pathway, composed of the upstream MAP3K12 kinase and downstream MAP kinases MAPK1/ERK2 and MAPK3/ERK1, that enhances the AP-1-mediated transcription of APP in response to APOE. The chain is Dual specificity mitogen-activated protein kinase kinase 7 from Rattus norvegicus (Rat).